Consider the following 282-residue polypeptide: Undecaprenyl-diphosphatase (282 aa).

Transmembrane regions (helical) follow at residues 51–71 (TLVA…AAVI), 87–107 (MGWM…LFET), 115–135 (SLYW…LAEG), 191–211 (ATAA…AGLY), 229–249 (NILV…AFLL), and 259–279 (IFIA…ATGV).

It belongs to the UppP family.

The protein localises to the cell inner membrane. The enzyme catalyses di-trans,octa-cis-undecaprenyl diphosphate + H2O = di-trans,octa-cis-undecaprenyl phosphate + phosphate + H(+). Functionally, catalyzes the dephosphorylation of undecaprenyl diphosphate (UPP). Confers resistance to bacitracin. In Pelodictyon phaeoclathratiforme (strain DSM 5477 / BU-1), this protein is Undecaprenyl-diphosphatase.